Consider the following 248-residue polypeptide: Probable transcriptional regulatory protein Acid345_2125 (248 aa).

This sequence belongs to the TACO1 family.

The protein localises to the cytoplasm. This chain is Probable transcriptional regulatory protein Acid345_2125, found in Koribacter versatilis (strain Ellin345).